A 1357-amino-acid polypeptide reads, in one-letter code: DNA-directed RNA polymerase subunit beta (1357 aa).

It belongs to the RNA polymerase beta chain family. In terms of assembly, the RNAP catalytic core consists of 2 alpha, 1 beta, 1 beta' and 1 omega subunit. When a sigma factor is associated with the core the holoenzyme is formed, which can initiate transcription.

The catalysed reaction is RNA(n) + a ribonucleoside 5'-triphosphate = RNA(n+1) + diphosphate. Its function is as follows. DNA-dependent RNA polymerase catalyzes the transcription of DNA into RNA using the four ribonucleoside triphosphates as substrates. The protein is DNA-directed RNA polymerase subunit beta of Ectopseudomonas mendocina (strain ymp) (Pseudomonas mendocina).